The sequence spans 493 residues: Chromosomal replication initiator protein DnaA (493 aa).

The interval 1 to 105 (MSDTIQQEAP…LMYSIVIDKS (105 aa)) is domain I, interacts with DnaA modulators. The tract at residues 105 to 152 (SQGQPVTIELPHQIDAAPAERSVRPEAPGQKASAERERLEIARPRFES) is domain II. The disordered stretch occupies residues 121–140 (APAERSVRPEAPGQKASAER). The tract at residues 153-370 (NLNPKYTFST…GCIVKLLAAH (218 aa)) is domain III, AAA+ region. Residues Gly-198, Gly-200, Lys-201, and Thr-202 each contribute to the ATP site. Positions 371-493 (SLDNQEIDLQ…LRKRIEIMSM (123 aa)) are domain IV, binds dsDNA.

Belongs to the DnaA family. In terms of assembly, oligomerizes as a right-handed, spiral filament on DNA at oriC.

It localises to the cytoplasm. In terms of biological role, plays an essential role in the initiation and regulation of chromosomal replication. ATP-DnaA binds to the origin of replication (oriC) to initiate formation of the DNA replication initiation complex once per cell cycle. Binds the DnaA box (a 9 base pair repeat at the origin) and separates the double-stranded (ds)DNA. Forms a right-handed helical filament on oriC DNA; dsDNA binds to the exterior of the filament while single-stranded (ss)DNA is stabiized in the filament's interior. The ATP-DnaA-oriC complex binds and stabilizes one strand of the AT-rich DNA unwinding element (DUE), permitting loading of DNA polymerase. After initiation quickly degrades to an ADP-DnaA complex that is not apt for DNA replication. Binds acidic phospholipids. This Chlorobaculum tepidum (strain ATCC 49652 / DSM 12025 / NBRC 103806 / TLS) (Chlorobium tepidum) protein is Chromosomal replication initiator protein DnaA.